The sequence spans 276 residues: MSIFRTEEILKAAKMPPEAVHMSRLIDAVYFPILIILLVGTYHMHFMLLAGDWDFWMDWKDRQWWPVVTPIVGITYCSAIMYYLWVNYRQPFGATLCVVCLLIGEWLTRYWGFYWWSHYPINFVTPGIMLPGALMLDFTLYLTRNWLVTALVGGGFFGLLFYPGNWPIFGPTHLPIVVEGTLLSMADYMGHLYVRTGTPEYVRHIEQGSLRTFGGHTTVIAAFFSAFVSMLMFTVWWYLGKVYCTAFFYVKGKRGRIVHRNDVTAFGEEGFPEGIK.

Transmembrane regions (helical) follow at residues 29–49 (VYFP…FMLL), 66–86 (PVVT…YLWV), 96–116 (LCVV…FYWW), 123–143 (FVTP…LYLT), and 150–170 (ALVG…PIFG). Cu(+) contacts are provided by D187, H191, and H204. Residues 219–239 (VIAAFFSAFVSMLMFTVWWYL) traverse the membrane as a helical segment.

In terms of assembly, the soluble ammonia monooxygenase is a nonamer composed of three alpha subunits (AmoA), three beta subunits (AmoB) and three gamma subunits (Cytochrome c1 PetC). The cofactor is Cu(+).

The protein resides in the cell membrane. It localises to the cytoplasm. It catalyses the reaction AH2 + NH4(+) + O2 = hydroxylamine + A + H2O + H(+). Its activity is regulated as follows. In vitro, inhibited by acetylene. In fact, acetylene is oxidized to ketene which binds irreversibly to His-191 of ammonia monooxygenase alpha subunit (AmoA). Part of the ammonia monooxygenase complex, which catalyzes the oxidation of ammonia to hydroxylamine, the first reaction in the process of ammonia oxidation to nitrite. The polypeptide is Ammonia monooxygenase alpha subunit (Nitrosomonas europaea (strain ATCC 19718 / CIP 103999 / KCTC 2705 / NBRC 14298)).